The primary structure comprises 594 residues: Arginine--tRNA ligase (594 aa).

Positions 139-149 match the 'HIGH' region motif; sequence ANPTGPLHVGH.

The protein belongs to the class-I aminoacyl-tRNA synthetase family. In terms of assembly, monomer.

Its subcellular location is the cytoplasm. It carries out the reaction tRNA(Arg) + L-arginine + ATP = L-arginyl-tRNA(Arg) + AMP + diphosphate. The chain is Arginine--tRNA ligase from Burkholderia pseudomallei (strain 1106a).